Here is a 438-residue protein sequence, read N- to C-terminus: Protein translocase subunit SecY (438 aa).

A helical membrane pass occupies residues 1–43 (MKIKPILELIPEVKRPLKGVSFKEKIQWTGLVLILYFILGTID). The Extracellular segment spans residues 44-54 (IYMGGAEMPAM). The segment at residues 55–62 (FAFWQTVT) is an intramembrane region (helical). A discontinuously helical transmembrane segment spans residues 55 to 83 (FAFWQTVTASKMGTLITLGIGPIVTAGII). The stretch at 63–74 (ASKMGTLITLGI) is an intramembrane region. Positions 75-83 (GPIVTAGII) form an intramembrane region, helical. The Cytoplasmic portion of the chain corresponds to 84–104 (MQLLVGSELISLDLSKPMNRA). The chain crosses the membrane as a helical span at residues 105-129 (LFQGLQKLFGIFLCFLEAVMFVGAG). Topologically, residues 130-136 (AFGVVNS) are extracellular. A helical membrane pass occupies residues 137–161 (TLALILVLQLALGAILVIYLDEIVS). Over 162–167 (RYGIGS) the chain is Cytoplasmic. A helical membrane pass occupies residues 168–186 (GIGLFIAAGVAQTIFVGAF). Residues 187–209 (GAEGYLWKFFSAMSVGSLGIAFE) lie on the Extracellular side of the membrane. The helical transmembrane segment at 210–231 (YILPILSTLFVFLVVVYVESIR) threads the bilayer. At 232–256 (VEIPLAHGRVKGAVGKYPIKFIYVS) the chain is on the cytoplasmic side. A helical membrane pass occupies residues 257 to 278 (NLPVILAAALFANIQLWGMFLD). The Extracellular portion of the chain corresponds to 279 to 315 (RMGYPILGQYSNGTAVSGIAYYFSTPYGISNIISDPL). A helical transmembrane segment spans residues 316–335 (HAIFYTLMMVIFCILFGLFW). Topologically, residues 336–378 (VETSGLDAKSMAKKLGNLDMAIKGFRKSQKSIEQRLKRYIKPI) are cytoplasmic. A helical membrane pass occupies residues 379–397 (TVMGSAFVGFLAAAADFTG). Residues 398–400 (ALG) lie on the Extracellular side of the membrane. The chain crosses the membrane as a helical span at residues 401 to 415 (GGTGVLLTVSIVYRL). Residues 416–438 (YEQLVQEQLSELHPAVAKFVGKR) lie on the Cytoplasmic side of the membrane.

The protein belongs to the SecY/SEC61-alpha family. Component of the Sec protein translocase complex. Heterotrimer consisting of alpha (SecY), beta (SecG) and gamma (SecE) subunits. The heterotrimers can form oligomers, although 1 heterotrimer is thought to be able to translocate proteins. Interacts with the ribosome. May interact with SecDF, and other proteins may be involved.

It localises to the cell membrane. The central subunit of the protein translocation channel SecYEG. Consists of two halves formed by TMs 1-5 and 6-10. These two domains form a lateral gate at the front which open onto the bilayer between TMs 2 and 7, and are clamped together by SecE at the back. The channel is closed by both a pore ring composed of hydrophobic SecY resides and a short helix (helix 2A) on the extracellular side of the membrane which forms a plug. The plug probably moves laterally to allow the channel to open. The ring and the pore may move independently. In Methanococcus vannielii, this protein is Protein translocase subunit SecY.